Here is a 2038-residue protein sequence, read N- to C-terminus: HEAT repeat-containing protein 5A (2038 aa).

2 HEAT repeats span residues 850–887 (EVRR…VADD) and 1082–1119 (LLRR…AAAD). The interval 1646–1668 (RSAEVDDGASEKETLPEFGEGKD) is disordered. Position 1647 is a phosphoserine (Ser1647).

Belongs to the HEATR5 family.

This is HEAT repeat-containing protein 5A (Heatr5a) from Mus musculus (Mouse).